We begin with the raw amino-acid sequence, 134 residues long: Small ribosomal subunit protein uS9 (134 aa).

A disordered region spans residues E114 to R134. Over residues Y120–R134 the composition is skewed to basic residues.

This sequence belongs to the universal ribosomal protein uS9 family.

The chain is Small ribosomal subunit protein uS9 from Thermotoga neapolitana (strain ATCC 49049 / DSM 4359 / NBRC 107923 / NS-E).